Here is a 221-residue protein sequence, read N- to C-terminus: CASP-like protein 4B1 (221 aa).

Residues 1-78 (MAMQLHAASP…HDHHGGGGGG (78 aa)) are disordered. The Cytoplasmic segment spans residues 1-87 (MAMQLHAASP…GDEATQLLNG (87 aa)). Positions 19-33 (SPPPPPPLSPHPEPA) are enriched in pro residues. The span at 50–62 (APVATATTPLTPG) shows a compositional bias: low complexity. Residues 88-108 (IVLVLRAGAALLSFVAMALVA) form a helical membrane-spanning segment. The Extracellular portion of the chain corresponds to 109-125 (SCRHGDWMDFLRYQEYR). A helical membrane pass occupies residues 126–146 (YLLGVSVVAFVYSAAQALKNF). Residues 147-160 (RRRRRGAADASFLD) lie on the Cytoplasmic side of the membrane. The helical transmembrane segment at 161 to 181 (FAGDQAVAYLLVTASAAALPI) threads the bilayer. At 182–196 (TIRMRSAVVNVFTDA) the chain is on the extracellular side. The chain crosses the membrane as a helical span at residues 197–217 (IAASIALGFLAFAALALSAML). Residues 218-221 (SRHA) lie on the Cytoplasmic side of the membrane.

This sequence belongs to the Casparian strip membrane proteins (CASP) family. As to quaternary structure, homodimer and heterodimers.

The protein localises to the cell membrane. The polypeptide is CASP-like protein 4B1 (Hordeum vulgare subsp. vulgare (Domesticated barley)).